Reading from the N-terminus, the 202-residue chain is DNA polymerase III subunit epsilon (202 aa).

Residues aspartate 23 and glutamate 25 each coordinate a divalent metal cation. The substrate site is built by aspartate 23 and glutamate 25. Histidine 162 (proton acceptor) is an active-site residue. Aspartate 167 contributes to the a divalent metal cation binding site. Aspartate 167 contacts substrate.

As to quaternary structure, DNA polymerase III contains a core (composed of alpha, epsilon and theta chains) that associates with a tau subunit. This core dimerizes to form the POLIII' complex. PolIII' associates with the gamma complex (composed of gamma, delta, delta', psi and chi chains) and with the beta chain to form the complete DNA polymerase III complex. It depends on Mg(2+) as a cofactor. Mn(2+) serves as cofactor.

The catalysed reaction is DNA(n) + a 2'-deoxyribonucleoside 5'-triphosphate = DNA(n+1) + diphosphate. Functionally, DNA polymerase III is a complex, multichain enzyme responsible for most of the replicative synthesis in bacteria. The epsilon subunit contain the editing function and is a proofreading 3'-5' exonuclease. This Aquifex aeolicus (strain VF5) protein is DNA polymerase III subunit epsilon (dnaQ).